The primary structure comprises 694 residues: MGKAKNKKKFLKNRKQVLVPGTLFVHSRKGFGFVSPDQPELYPFDIFISASDLKGALDGDHVLVALPFSLRGGEKRKGVIHKVLSRGKTVLVGTIVSLINPTLAMVYVNTIGPEHPLKAELLPKRTYKLGDRLLLKTPVWKENYPSREPPPLAMLEFIGNISNAKTDFPVIKAEFSITEEFPDAVVQEASQFLQKHVTQALHSRKDLRDLLCFTIDSSSAKDFDDAVSLTYDHEGNYILGVHIADVSHYVTPNSALDREAAKRCNSIYFPGKVIPMLPSALSDNLCSLKPNVDRLAVSVFMTFSKEGFLSDYRILRSVIRSKYRMTYDEVDEIIEKKQTHPISKTILKMAELSRIFSDIREQRGCTRLVLPSFTMSLDNLQEPVALIENKQTAAHKLIEEFMLKANEVIAYHISHQGITMPFRTHEPPNEESLLVFQETAKAMGFTITQTPAQEPDYQYLLQETTAGHPLEPILHSQFVRSMKTASYSTENKGHYGLCLDYYTHFTSPIRRYVDLIVHRLLFHPLSVEEEHLEQIVRACSSQERIAAKAEGAFVNIKKARFLKKFIEEQPATLYKAFIITASPEGISFVLPEFCHEGFIPAAKLPQAYVLQTKIGLEELPEHLRPGAVISVQLASVTLLTQSIEWTLVEATTKAKAKRTSKKKKTESVTTKEKKKSPAKKKKGATKTKKGSGKN.

The RNB domain maps to Arg-204–Leu-525. One can recognise an S1 motif domain in the interval Ala-571–Val-648. A disordered region spans residues Thr-652–Asn-694. 2 stretches are compositionally biased toward basic residues: residues Ala-654–Lys-664 and Glu-672–Asn-694.

It belongs to the RNR ribonuclease family. RNase R subfamily.

The protein resides in the cytoplasm. It carries out the reaction Exonucleolytic cleavage in the 3'- to 5'-direction to yield nucleoside 5'-phosphates.. 3'-5' exoribonuclease that releases 5'-nucleoside monophosphates and is involved in maturation of structured RNAs. The chain is Ribonuclease R from Chlamydia trachomatis serovar D (strain ATCC VR-885 / DSM 19411 / UW-3/Cx).